Consider the following 101-residue polypeptide: Urease subunit beta (101 aa).

It belongs to the urease beta subunit family. Heterotrimer of UreA (gamma), UreB (beta) and UreC (alpha) subunits. Three heterotrimers associate to form the active enzyme.

Its subcellular location is the cytoplasm. It catalyses the reaction urea + 2 H2O + H(+) = hydrogencarbonate + 2 NH4(+). The protein operates within nitrogen metabolism; urea degradation; CO(2) and NH(3) from urea (urease route): step 1/1. The protein is Urease subunit beta of Dinoroseobacter shibae (strain DSM 16493 / NCIMB 14021 / DFL 12).